Here is a 460-residue protein sequence, read N- to C-terminus: Protein Peter pan (460 aa).

The Brix domain occupies 28 to 290 (PHSFVIHRGL…LIKIEEGLLT (263 aa)). Residues S237 and S239 each carry the phosphoserine modification. Residues 295–350 (YHDHVVKTEDEKETLRKLVEKKRKQKEQRKKEQAENRARNLKLKKDEKWAAKRAAE) are a coiled coil. The segment at 315 to 460 (KKRKQKEQRK…FDHRKSRKSK (146 aa)) is disordered. 2 stretches are compositionally biased toward basic and acidic residues: residues 323 to 355 (RKKEQAENRARNLKLKKDEKWAAKRAAEGRTDS) and 401 to 446 (AKLD…DPKN). T353 carries the post-translational modification Phosphothreonine. Position 355 is a phosphoserine (S355). Basic residues predominate over residues 447-460 (KRAKFDHRKSRKSK).

It belongs to the PPAN family. In terms of tissue distribution, ubiquitous.

Its function is as follows. Required for initiation of larval growth and normal mitotic growth but is not absolutely required for general biosynthesis or DNA replication. Required for progression of normal oogenesis and maturation of some imaginal tissues into adult structures. In Drosophila melanogaster (Fruit fly), this protein is Protein Peter pan (ppan).